Consider the following 1017-residue polypeptide: uncharacterized protein (1017 aa).

The segment at residues 1-34 (MGNLTMSRRTFVKTAAITGAAAAAFGASTHTALA) is a signal peptide (tat-type signal). The 4Fe-4S Mo/W bis-MGD-type domain occupies 45 to 103 (DTVAVKTCCRGCGKMECGVKVIVQNGRAIRVEGDEGAFQSMGNCCTKSQSSIQAAYHPD). Residues C53, C56, C61, and C89 each coordinate [4Fe-4S] cluster. Catalysis depends on K91, which acts as the Electron donor/acceptor.

This sequence belongs to the prokaryotic molybdopterin-containing oxidoreductase family. Requires [4Fe-4S] cluster as cofactor. Mo-bis(molybdopterin guanine dinucleotide) serves as cofactor. In terms of processing, predicted to be exported by the Tat system. The position of the signal peptide cleavage has not been experimentally proven.

This is an uncharacterized protein from Eggerthella lenta (strain ATCC 25559 / DSM 2243 / CCUG 17323 / JCM 9979 / KCTC 3265 / NCTC 11813 / VPI 0255 / 1899 B) (Eubacterium lentum).